Here is a 301-residue protein sequence, read N- to C-terminus: Amylovoran biosynthesis glycosyltransferase AmsB (301 aa).

Belongs to the glycosyltransferase 2 family.

Its pathway is glycan metabolism; exopolysaccharide biosynthesis. Functionally, involved in the biosynthesis of amylovoran, which functions as a virulence factor. May function as a glycosyl transferase which transfers galactose from UDP-galactose to a lipid-linked amylovoran-subunit precursor. The polypeptide is Amylovoran biosynthesis glycosyltransferase AmsB (amsB) (Erwinia amylovora (Fire blight bacteria)).